Consider the following 396-residue polypeptide: S-arrestin (396 aa).

Positions 375–386 (ARDPLKGELQAE) are enriched in basic and acidic residues. Residues 375–396 (ARDPLKGELQAEEKEEEEDDEK) are disordered. Residues 387 to 396 (EKEEEEDDEK) show a composition bias toward acidic residues.

This sequence belongs to the arrestin family. As to quaternary structure, interacts with RHO (via the phosphorylated C-terminus).

Its subcellular location is the cell projection. The protein localises to the cilium. It localises to the photoreceptor outer segment. It is found in the membrane. In terms of biological role, binds to photoactivated, phosphorylated RHO and terminates RHO signaling via G-proteins by competing with G-proteins for the same binding site on RHO. May play a role in preventing light-dependent degeneration of retinal photoreceptor cells. In Xenopus laevis (African clawed frog), this protein is S-arrestin (sag).